The sequence spans 487 residues: Betaine aldehyde dehydrogenase (487 aa).

K(+)-binding residues include S26 and D93. 150-152 provides a ligand contact to NAD(+); the sequence is GAW. The Charge relay system role is filled by K162. Residues 176 to 179 and 229 to 232 contribute to the NAD(+) site; these read KPSE and SVPT. A K(+)-binding site is contributed by L244. E250 functions as the Proton acceptor in the catalytic mechanism. NAD(+)-binding residues include G252, C284, and E384. C284 (nucleophile) is an active-site residue. C284 carries the post-translational modification Cysteine sulfenic acid (-SOH). Residues K454 and G457 each contribute to the K(+) site. E461 (charge relay system) is an active-site residue.

This sequence belongs to the aldehyde dehydrogenase family. As to quaternary structure, dimer of dimers. It depends on K(+) as a cofactor.

The catalysed reaction is betaine aldehyde + NAD(+) + H2O = glycine betaine + NADH + 2 H(+). The protein operates within amine and polyamine biosynthesis; betaine biosynthesis via choline pathway; betaine from betaine aldehyde: step 1/1. In terms of biological role, involved in the biosynthesis of the osmoprotectant glycine betaine. Catalyzes the irreversible oxidation of betaine aldehyde to the corresponding acid. The sequence is that of Betaine aldehyde dehydrogenase from Rhizobium johnstonii (strain DSM 114642 / LMG 32736 / 3841) (Rhizobium leguminosarum bv. viciae).